A 214-amino-acid polypeptide reads, in one-letter code: Pyridoxine/pyridoxamine 5'-phosphate oxidase (214 aa).

Substrate is bound by residues 9 to 12 and Lys67; that span reads RREY. FMN-binding positions include 62-67, 77-78, Arg83, Lys84, and Gln106; these read RTVLLK and YS. 3 residues coordinate substrate: Tyr124, Arg128, and Ser132. Residues 141-142 and Trp186 each bind FMN; that span reads QS. Position 192–194 (192–194) interacts with substrate; that stretch reads RLH. Arg196 is a binding site for FMN.

This sequence belongs to the pyridoxamine 5'-phosphate oxidase family. Homodimer. FMN serves as cofactor.

The enzyme catalyses pyridoxamine 5'-phosphate + O2 + H2O = pyridoxal 5'-phosphate + H2O2 + NH4(+). The catalysed reaction is pyridoxine 5'-phosphate + O2 = pyridoxal 5'-phosphate + H2O2. It functions in the pathway cofactor metabolism; pyridoxal 5'-phosphate salvage; pyridoxal 5'-phosphate from pyridoxamine 5'-phosphate: step 1/1. Its pathway is cofactor metabolism; pyridoxal 5'-phosphate salvage; pyridoxal 5'-phosphate from pyridoxine 5'-phosphate: step 1/1. In terms of biological role, catalyzes the oxidation of either pyridoxine 5'-phosphate (PNP) or pyridoxamine 5'-phosphate (PMP) into pyridoxal 5'-phosphate (PLP). In Porphyromonas gingivalis (strain ATCC 33277 / DSM 20709 / CIP 103683 / JCM 12257 / NCTC 11834 / 2561), this protein is Pyridoxine/pyridoxamine 5'-phosphate oxidase.